The following is a 265-amino-acid chain: Transcription factor LBX1 (265 aa).

Basic and acidic residues predominate over residues 1 to 20 (MTSKDEAKSSSVEERRRHAL). A disordered region spans residues 1-33 (MTSKDEAKSSSVEERRRHALDLLPPPANSNKPL). The segment at residues 125–184 (RRKSRTAFTNHQIYELEKRFLYQKYLSPADRDQIAQQLGLTNAQVITWFQNRRAKLKRDL) is a DNA-binding region (homeobox). Residues 212–265 (EEETNSVRDDSRSRSPQLGLSGHMPLSPSSPLTEQHTSKECSEDEEDVEIDVDD) are disordered. Residues 253–265 (SEDEEDVEIDVDD) show a composition bias toward acidic residues.

It is found in the nucleus. Functionally, transcription factor that controls hypaxial muscle development by down-regulating myod1 and cdkn1b/p27, thereby allowing myoblasts to proliferate before the onset of terminal differentiation. The chain is Transcription factor LBX1 from Xenopus tropicalis (Western clawed frog).